A 439-amino-acid polypeptide reads, in one-letter code: GTPase Der (439 aa).

EngA-type G domains are found at residues 2 to 168 and 181 to 357; these read ATVL…EEKG and IKVA…ASYT. GTP is bound by residues 8–15, 55–59, 118–121, 187–194, 234–238, and 300–303; these read GKPNVGKS, DTCGV, NKAE, GRPNVGKS, DTAGL, and NKWD. The 82-residue stretch at 358 to 439 folds into the KH-like domain; sequence TKVPSSAINS…PIFLKFKRSR (82 aa).

Belongs to the TRAFAC class TrmE-Era-EngA-EngB-Septin-like GTPase superfamily. EngA (Der) GTPase family. Associates with the 50S ribosomal subunit.

Functionally, GTPase that plays an essential role in the late steps of ribosome biogenesis. This chain is GTPase Der, found in Thermotoga sp. (strain RQ2).